A 156-amino-acid chain; its full sequence is Small ribosomal subunit protein uS7 (156 aa).

The protein belongs to the universal ribosomal protein uS7 family. As to quaternary structure, part of the 30S ribosomal subunit. Contacts proteins S9 and S11.

Its function is as follows. One of the primary rRNA binding proteins, it binds directly to 16S rRNA where it nucleates assembly of the head domain of the 30S subunit. Is located at the subunit interface close to the decoding center, probably blocks exit of the E-site tRNA. The protein is Small ribosomal subunit protein uS7 of Deinococcus geothermalis (strain DSM 11300 / CIP 105573 / AG-3a).